Reading from the N-terminus, the 520-residue chain is Leucine aminopeptidase 1 (520 aa).

Residues Lys288 and Asp293 each contribute to the Mn(2+) site. Lys300 is a catalytic residue. Mn(2+) is bound by residues Asp313, Asp373, and Glu375. The active site involves Arg377.

The protein belongs to the peptidase M17 family. In terms of assembly, homohexamer (dimer of homotrimers). Mn(2+) is required as a cofactor.

The protein localises to the cytoplasm. The enzyme catalyses Release of an N-terminal amino acid, Xaa-|-Yaa-, in which Xaa is preferably Leu, but may be other amino acids including Pro although not Arg or Lys, and Yaa may be Pro. Amino acid amides and methyl esters are also readily hydrolyzed, but rates on arylamides are exceedingly low.. It carries out the reaction Release of N-terminal proline from a peptide.. Functionally, presumably involved in the processing and regular turnover of intracellular proteins. Catalyzes the removal of unsubstituted N-terminal amino acids from various peptides. Possesses leucine aminopeptidase activity against the model substrate leucine-amido methyl coumarin. Possesses Cys-Gly dipeptidase activity. In addition, can cleave Cys-Leu and Leu-Cys dipeptides. Functions as a molecular chaperone to protect proteins from heat-induced damage. The sequence is that of Leucine aminopeptidase 1 from Arabidopsis thaliana (Mouse-ear cress).